A 202-amino-acid polypeptide reads, in one-letter code: Orotate phosphoribosyltransferase (202 aa).

5-phospho-alpha-D-ribose 1-diphosphate is bound at residue 113–121 (EDIITTGGS). The orotate site is built by Thr-117 and Arg-145.

It belongs to the purine/pyrimidine phosphoribosyltransferase family. PyrE subfamily. Homodimer. Requires Mg(2+) as cofactor.

It catalyses the reaction orotidine 5'-phosphate + diphosphate = orotate + 5-phospho-alpha-D-ribose 1-diphosphate. It participates in pyrimidine metabolism; UMP biosynthesis via de novo pathway; UMP from orotate: step 1/2. In terms of biological role, catalyzes the transfer of a ribosyl phosphate group from 5-phosphoribose 1-diphosphate to orotate, leading to the formation of orotidine monophosphate (OMP). The protein is Orotate phosphoribosyltransferase of Campylobacter lari (strain RM2100 / D67 / ATCC BAA-1060).